We begin with the raw amino-acid sequence, 453 residues long: Calcium-binding tyrosine phosphorylation-regulated protein (453 aa).

Residues 12 to 49 (YGLKTLLEGVSRAILKTNPTNITQFAAVYFKELIVFRE) form the RIIa domain. 3 disordered regions span residues 86-165 (PIKP…PVSA), 246-278 (PVSE…QVTS), and 406-453 (IINP…PEQV). The segment covering 143–154 (DKPTTPKTDYTP) has biased composition (low complexity).

In terms of assembly, interacts with FSCB. Post-translationally, phosphorylated on tyrosine residues during in vitro capacitation. Dephosphorylation affects its ability to bind calcium. As to expression, expressed in spermatozoa.

It localises to the cytoplasm. It is found in the cytoskeleton. Its subcellular location is the cell projection. The protein localises to the cilium. The protein resides in the flagellum. May function as a regulator of both motility- and head-associated functions such as capacitation and the acrosome reaction. May bind calcium in vitro. This Mus musculus (Mouse) protein is Calcium-binding tyrosine phosphorylation-regulated protein (Cabyr).